We begin with the raw amino-acid sequence, 214 residues long: Large ribosomal subunit protein uL1 (214 aa).

The protein belongs to the universal ribosomal protein uL1 family. In terms of assembly, part of the 50S ribosomal subunit.

Binds directly to 23S rRNA. Probably involved in E site tRNA release. Functionally, protein L1 is also a translational repressor protein, it controls the translation of its operon by binding to its mRNA. The protein is Large ribosomal subunit protein uL1 of Methanopyrus kandleri (strain AV19 / DSM 6324 / JCM 9639 / NBRC 100938).